Reading from the N-terminus, the 187-residue chain is Elongation factor P (187 aa).

Lysine 33 bears the N6-(3,6-diaminohexanoyl)-5-hydroxylysine mark.

The protein belongs to the elongation factor P family. In terms of processing, may be beta-lysylated on the epsilon-amino group of Lys-33 by the combined action of EpmA and EpmB, and then hydroxylated on the C5 position of the same residue by EpmC (if this protein is present). Lysylation is critical for the stimulatory effect of EF-P on peptide-bond formation. The lysylation moiety may extend toward the peptidyltransferase center and stabilize the terminal 3-CCA end of the tRNA. Hydroxylation of the C5 position on Lys-33 may allow additional potential stabilizing hydrogen-bond interactions with the P-tRNA.

Its subcellular location is the cytoplasm. The protein operates within protein biosynthesis; polypeptide chain elongation. Functionally, involved in peptide bond synthesis. Alleviates ribosome stalling that occurs when 3 or more consecutive Pro residues or the sequence PPG is present in a protein, possibly by augmenting the peptidyl transferase activity of the ribosome. Modification of Lys-33 is required for alleviation. The sequence is that of Elongation factor P from Blochmanniella floridana.